Reading from the N-terminus, the 237-residue chain is 1-(5-phosphoribosyl)-5-[(5-phosphoribosylamino)methylideneamino] imidazole-4-carboxamide isomerase (237 aa).

Catalysis depends on Asp-8, which acts as the Proton acceptor. Asp-129 (proton donor) is an active-site residue.

It belongs to the HisA/HisF family.

The protein localises to the cytoplasm. It catalyses the reaction 1-(5-phospho-beta-D-ribosyl)-5-[(5-phospho-beta-D-ribosylamino)methylideneamino]imidazole-4-carboxamide = 5-[(5-phospho-1-deoxy-D-ribulos-1-ylimino)methylamino]-1-(5-phospho-beta-D-ribosyl)imidazole-4-carboxamide. It participates in amino-acid biosynthesis; L-histidine biosynthesis; L-histidine from 5-phospho-alpha-D-ribose 1-diphosphate: step 4/9. This is 1-(5-phosphoribosyl)-5-[(5-phosphoribosylamino)methylideneamino] imidazole-4-carboxamide isomerase from Alkaliphilus metalliredigens (strain QYMF).